Here is a 264-residue protein sequence, read N- to C-terminus: 3-methyl-2-oxobutanoate hydroxymethyltransferase (264 aa).

Residues aspartate 45 and aspartate 84 each coordinate Mg(2+). Residues 45-46, aspartate 84, and lysine 112 contribute to the 3-methyl-2-oxobutanoate site; that span reads DS. Mg(2+) is bound at residue glutamate 114. Catalysis depends on glutamate 181, which acts as the Proton acceptor.

Belongs to the PanB family. As to quaternary structure, homodecamer; pentamer of dimers. Mg(2+) serves as cofactor.

The protein localises to the cytoplasm. It catalyses the reaction 3-methyl-2-oxobutanoate + (6R)-5,10-methylene-5,6,7,8-tetrahydrofolate + H2O = 2-dehydropantoate + (6S)-5,6,7,8-tetrahydrofolate. Its pathway is cofactor biosynthesis; (R)-pantothenate biosynthesis; (R)-pantoate from 3-methyl-2-oxobutanoate: step 1/2. Catalyzes the reversible reaction in which hydroxymethyl group from 5,10-methylenetetrahydrofolate is transferred onto alpha-ketoisovalerate to form ketopantoate. In Colwellia psychrerythraea (strain 34H / ATCC BAA-681) (Vibrio psychroerythus), this protein is 3-methyl-2-oxobutanoate hydroxymethyltransferase.